The following is a 999-amino-acid chain: Bifunctional glutamine synthetase adenylyltransferase/adenylyl-removing enzyme (999 aa).

Positions 1–483 (MTPGRRSSTF…LHEKLFYRPL (483 aa)) are adenylyl removase. An adenylyl transferase region spans residues 489–999 (QLAPGEARLS…RTVVEDLFYA (511 aa)).

The protein belongs to the GlnE family. Mg(2+) is required as a cofactor.

The catalysed reaction is [glutamine synthetase]-O(4)-(5'-adenylyl)-L-tyrosine + phosphate = [glutamine synthetase]-L-tyrosine + ADP. The enzyme catalyses [glutamine synthetase]-L-tyrosine + ATP = [glutamine synthetase]-O(4)-(5'-adenylyl)-L-tyrosine + diphosphate. Its function is as follows. Adenylation and deadenylation of glutamate--ammonia ligase. Involved in the regulation of glutamine synthetase GlnA, a key enzyme in the process to assimilate ammonia. When cellular nitrogen levels are high, the C-terminal adenylyl transferase (AT) inactivates GlnA by covalent transfer of an adenylyl group from ATP to specific tyrosine residue of GlnA, thus reducing its activity. Conversely, when nitrogen levels are low, the N-terminal adenylyl removase (AR) activates GlnA by removing the adenylyl group by phosphorolysis, increasing its activity. The regulatory region of GlnE binds the signal transduction protein PII (GlnB) which indicates the nitrogen status of the cell. The polypeptide is Bifunctional glutamine synthetase adenylyltransferase/adenylyl-removing enzyme (Streptomyces coelicolor (strain ATCC BAA-471 / A3(2) / M145)).